A 535-amino-acid chain; its full sequence is MAKKVAVIGAGVSGLISLKCCVDEGLEPTCFERTEDIGGVWRFKENVEDGRASIYQSVVTNTSKEMSCFSDFPMPEDFPNFLHNSKLLEYFRIFAKKFDLLKYIQFQTTVLSVRKCPDFSSSGQWKVVTQSNGKEQSAVFDAVMVCSGHHILPHIPLKSFPGMERFKGQYFHSRQYKHPDGFEGKRILVIGMGNSGSDIAVELSKNAAQVFISTRHGTWVMSRISEDGYPWDSVFHTRFRSMLRNVLPRTAVKWMIEQQMNRWFNHENYGLEPQNKYIMKEPVLNDDVPSRLLCGAIKVKSTVKELTETSAIFEDGTVEENIDVIIFATGYSFSFPFLEDSLVKVENNMVSLYKYIFPAHLDKSTLACIGLIQPLGSIFPTAELQARWVTRVFKGLCSLPSERTMMMDIIKRNEKRIDLFGESQSQTLQTNYVDYLDELALEIGAKPDFCSLLFKDPKLAVRLYFGPCNSYQYRLVGPGQWEGARNAIFTQKQRILKPLKTRALKDSSNFSVSFLLKILGLLAVVVAFFCQLQWS.

Ala-2 is modified (N-acetylalanine). Residues 9–13, Glu-32, 40–41, and 61–62 contribute to the FAD site; these read GAGVS, VW, and NT. NADP(+) is bound by residues 60-61 and 195-198; these read TN and SGSD. A Glycyl lysine isopeptide (Lys-Gly) (interchain with G-Cter in SUMO) cross-link involves residue Lys-492. The chain crosses the membrane as a helical span at residues 510 to 530; the sequence is FSVSFLLKILGLLAVVVAFFC.

It belongs to the FMO family. FAD is required as a cofactor. Mg(2+) serves as cofactor. As to expression, expressed in lung (at protein level). Expressed predominantly in lung, and at a much lesser extent in kidney. Also expressed in fetal lung, but not in liver, kidney and brain.

The protein resides in the microsome membrane. It is found in the endoplasmic reticulum membrane. Its function is as follows. Catalyzes the oxidative metabolism of numerous xenobiotics, including mainly therapeutic drugs and insecticides that contain a soft nucleophile, most commonly nitrogen and sulfur and participates to their bioactivation. Specifically catalyzes S-oxygenation of sulfur derived compounds such as thioureas-derived compounds, thioetherorganophosphates to their sulfenic acid. In vitro, catalyzes S-oxygenation of the second-line antitubercular drugs thiacetazone (TAZ) and ethionamide (ETA), forming a sulfinic acid and a carbodiimide via a postulated sulfenic acid intermediate. Also catalyzes S-oxygenation of the thioether-containing organophosphate insecticides, phorate and disulfoton. This Homo sapiens (Human) protein is Flavin-containing monooxygenase 2.